We begin with the raw amino-acid sequence, 181 residues long: MAEPRRALAQMDDARISVGNARFLIIEAPYYEDIAAQLRAGAEAALTRAQARFDVVSVPGALEIPIALAIALDRAPALYQGAIALGCIIRGETYHFEIVANESARALTQLVVERKLPFGNGILTVETETQALERASVESGDKGGDAARAALALYRFSQEFGQVVEQAQIQAQRPVLTSGAR.

5-amino-6-(D-ribitylamino)uracil contacts are provided by residues Tyr30, 61–63, and 87–89; these read ALE and CII. 92-93 serves as a coordination point for (2S)-2-hydroxy-3-oxobutyl phosphate; the sequence is ET. The active-site Proton donor is the His95. Residue Asn120 coordinates 5-amino-6-(D-ribitylamino)uracil. Residue Arg134 participates in (2S)-2-hydroxy-3-oxobutyl phosphate binding.

It belongs to the DMRL synthase family.

The enzyme catalyses (2S)-2-hydroxy-3-oxobutyl phosphate + 5-amino-6-(D-ribitylamino)uracil = 6,7-dimethyl-8-(1-D-ribityl)lumazine + phosphate + 2 H2O + H(+). It functions in the pathway cofactor biosynthesis; riboflavin biosynthesis; riboflavin from 2-hydroxy-3-oxobutyl phosphate and 5-amino-6-(D-ribitylamino)uracil: step 1/2. Catalyzes the formation of 6,7-dimethyl-8-ribityllumazine by condensation of 5-amino-6-(D-ribitylamino)uracil with 3,4-dihydroxy-2-butanone 4-phosphate. This is the penultimate step in the biosynthesis of riboflavin. In Beijerinckia indica subsp. indica (strain ATCC 9039 / DSM 1715 / NCIMB 8712), this protein is 6,7-dimethyl-8-ribityllumazine synthase.